The primary structure comprises 94 residues: Co-chaperonin GroES (94 aa).

This sequence belongs to the GroES chaperonin family. As to quaternary structure, heptamer of 7 subunits arranged in a ring. Interacts with the chaperonin GroEL.

The protein localises to the cytoplasm. In terms of biological role, together with the chaperonin GroEL, plays an essential role in assisting protein folding. The GroEL-GroES system forms a nano-cage that allows encapsulation of the non-native substrate proteins and provides a physical environment optimized to promote and accelerate protein folding. GroES binds to the apical surface of the GroEL ring, thereby capping the opening of the GroEL channel. The protein is Co-chaperonin GroES of Finegoldia magna (strain ATCC 29328 / DSM 20472 / WAL 2508) (Peptostreptococcus magnus).